Here is a 298-residue protein sequence, read N- to C-terminus: Transcription factor bHLH114 (298 aa).

A coiled-coil region spans residues leucine 117 to asparagine 149. Residues serine 126–serine 154 are disordered. The span at glutamate 129–serine 140 shows a compositional bias: polar residues. The bHLH domain occupies leucine 163–leucine 212.

Homodimer. As to expression, differentiating root endodermis.

It localises to the nucleus. This is Transcription factor bHLH114 (BHLH114) from Arabidopsis thaliana (Mouse-ear cress).